The chain runs to 1396 residues: DNA-directed RNA polymerase subunit beta' (1396 aa).

Cys-71, Cys-73, Cys-86, and Cys-89 together coordinate Zn(2+). The Mg(2+) site is built by Asp-462, Asp-464, and Asp-466. Zn(2+)-binding residues include Cys-810, Cys-884, Cys-891, and Cys-894. The segment covering 1372–1382 (DEQLAQQREDA) has biased composition (basic and acidic residues). Residues 1372-1396 (DEQLAQQREDAMEPLPAEIALSDAE) form a disordered region.

The protein belongs to the RNA polymerase beta' chain family. In terms of assembly, the RNAP catalytic core consists of 2 alpha, 1 beta, 1 beta' and 1 omega subunit. When a sigma factor is associated with the core the holoenzyme is formed, which can initiate transcription. Mg(2+) is required as a cofactor. The cofactor is Zn(2+).

It catalyses the reaction RNA(n) + a ribonucleoside 5'-triphosphate = RNA(n+1) + diphosphate. Functionally, DNA-dependent RNA polymerase catalyzes the transcription of DNA into RNA using the four ribonucleoside triphosphates as substrates. In Caulobacter vibrioides (strain ATCC 19089 / CIP 103742 / CB 15) (Caulobacter crescentus), this protein is DNA-directed RNA polymerase subunit beta'.